Consider the following 214-residue polypeptide: ATP phosphoribosyltransferase (214 aa).

Belongs to the ATP phosphoribosyltransferase family. Short subfamily. As to quaternary structure, heteromultimer composed of HisG and HisZ subunits.

The protein resides in the cytoplasm. The catalysed reaction is 1-(5-phospho-beta-D-ribosyl)-ATP + diphosphate = 5-phospho-alpha-D-ribose 1-diphosphate + ATP. Its pathway is amino-acid biosynthesis; L-histidine biosynthesis; L-histidine from 5-phospho-alpha-D-ribose 1-diphosphate: step 1/9. Catalyzes the condensation of ATP and 5-phosphoribose 1-diphosphate to form N'-(5'-phosphoribosyl)-ATP (PR-ATP). Has a crucial role in the pathway because the rate of histidine biosynthesis seems to be controlled primarily by regulation of HisG enzymatic activity. In Ruminiclostridium cellulolyticum (strain ATCC 35319 / DSM 5812 / JCM 6584 / H10) (Clostridium cellulolyticum), this protein is ATP phosphoribosyltransferase.